Consider the following 458-residue polypeptide: Argininosuccinate lyase (458 aa).

This sequence belongs to the lyase 1 family. Argininosuccinate lyase subfamily.

It is found in the cytoplasm. It carries out the reaction 2-(N(omega)-L-arginino)succinate = fumarate + L-arginine. It functions in the pathway amino-acid biosynthesis; L-arginine biosynthesis; L-arginine from L-ornithine and carbamoyl phosphate: step 3/3. This Neisseria gonorrhoeae (strain ATCC 700825 / FA 1090) protein is Argininosuccinate lyase.